The sequence spans 216 residues: MVDMTQLQAIYGGTFDPVHYGHLKPVEILANQIGLSKVIIMPNNVPPHRPQPEATSAQRVHMLKLAIADKPLFTLDERELRRDTPSWTAQTLQEWRQEQGPRKPLAFIIGQDSLLTFPTWHNYETILDNVHLIVCRRPGYPLTMAQEADQRWLDRHLTHDVESLHNSPSGVIYLAETPWFDISATIIRQRLERGESCAEMLPAAVLDYIREQGLYC.

Belongs to the NadD family.

It catalyses the reaction nicotinate beta-D-ribonucleotide + ATP + H(+) = deamido-NAD(+) + diphosphate. Its pathway is cofactor biosynthesis; NAD(+) biosynthesis; deamido-NAD(+) from nicotinate D-ribonucleotide: step 1/1. Catalyzes the reversible adenylation of nicotinate mononucleotide (NaMN) to nicotinic acid adenine dinucleotide (NaAD). The protein is Probable nicotinate-nucleotide adenylyltransferase of Klebsiella pneumoniae subsp. pneumoniae (strain ATCC 700721 / MGH 78578).